The sequence spans 698 residues: Quillaic acid 3-O-glycosyltransferase CSL1 (698 aa).

A helical transmembrane segment spans residues 14–34 (ALLSRLHILFHSALVASVFYY). Residue Asn-38 is glycosylated (N-linked (GlcNAc...) asparagine). A helical membrane pass occupies residues 42 to 62 (GPAWALMTFAELTLAFIWALT). UDP-alpha-D-glucose contacts are provided by Lys-99 and Glu-100. The active site involves Asp-129. Residue Asn-317 is glycosylated (N-linked (GlcNAc...) asparagine). Ser-436 is a catalytic residue. The next 6 membrane-spanning stretches (helical) occupy residues 478 to 498 (WTSG…YAMS), 508 to 528 (YAYF…GVVL), 546 to 566 (WLLA…YEVL), 581 to 601 (IWII…MLNK), 636 to 656 (MFMV…FGGL), and 669 to 689 (FAQL…MEEI).

This sequence belongs to the glycosyltransferase 2 family. Plant cellulose synthase-like G subfamily. Mainly expressed in flowers and flower buds and, to a lesser extent, in leaves, stems and roots.

It localises to the golgi apparatus membrane. Its pathway is secondary metabolite biosynthesis; terpenoid biosynthesis. Functionally, component of the oleanane-type triterpene saponins (e.g. saponarioside A and saponarioside B) biosynthetic pathway, leading to the production of natural products with detergent properties used as traditional sources of soap. Glycosyltransferase that mediates the conversion of quillaic acid (QA) to QA-mono via the initiation of the C-3 sugar chain. The protein is Quillaic acid 3-O-glycosyltransferase CSL1 of Saponaria officinalis (Common soapwort).